Consider the following 365-residue polypeptide: tRNA/tmRNA (uracil-C(5))-methyltransferase (365 aa).

Residues Q189, Y217, N222, E238, and D298 each contribute to the S-adenosyl-L-methionine site. C323 acts as the Nucleophile in catalysis. E357 serves as the catalytic Proton acceptor.

This sequence belongs to the class I-like SAM-binding methyltransferase superfamily. RNA M5U methyltransferase family. TrmA subfamily.

It catalyses the reaction uridine(54) in tRNA + S-adenosyl-L-methionine = 5-methyluridine(54) in tRNA + S-adenosyl-L-homocysteine + H(+). It carries out the reaction uridine(341) in tmRNA + S-adenosyl-L-methionine = 5-methyluridine(341) in tmRNA + S-adenosyl-L-homocysteine + H(+). Dual-specificity methyltransferase that catalyzes the formation of 5-methyluridine at position 54 (m5U54) in all tRNAs, and that of position 341 (m5U341) in tmRNA (transfer-mRNA). This chain is tRNA/tmRNA (uracil-C(5))-methyltransferase, found in Psychromonas ingrahamii (strain DSM 17664 / CCUG 51855 / 37).